Reading from the N-terminus, the 420-residue chain is MEGDMVAKVKRETVVACMTCPLCDKLLRDATTISECLHTFCRKCIYEKITEDEIESCPVCDIDLGGTPLEKLRPDHILQDLRAKLFPLKRKKERAPEVVSSISLPAKRKERSISSLVVSTPRVSAQAGTTGKRTKAATRKDVRGSGSFTKRTVKKEEEFGDDHVESASSPETLKKFTQNKRQSSYANPNQSLSNRRNKDVDEPWDSKLHLWKPLNFLVDVANGTKDPKSELGNASHNDVQGSKTKTKDHKRKCKLEEEISNNGDPTTSETATLKRTRRTRRKRSSTFGDSRIPLLPGAASLKQERRNGHVWFSLVASSNQEGEASLPQIPANYLRIRDGNIPVSFIQKYLMRKLDLKSEDEVEITCMGEPVIPTLQLHSLVDLWLETTSKHQRVAASIGSSAKEFVMVLVYSRKLPECNN.

The RING-type zinc-finger motif lies at C20 to D61. The span at I113–V123 shows a compositional bias: polar residues. Disordered regions lie at residues I113–D201 and D226–D289. Basic and acidic residues predominate over residues K154–E165. 2 stretches are compositionally biased toward polar residues: residues S166 to N194 and G232 to S242. Residues T244–C253 show a composition bias toward basic residues. Positions S260–L273 are enriched in polar residues. Residues K274 to S284 are compositionally biased toward basic residues.

In terms of assembly, interacts with DREB2A. Post-translationally, auto-ubiquitinated. Expressed in roots, leaves and flowers.

The enzyme catalyses S-ubiquitinyl-[E2 ubiquitin-conjugating enzyme]-L-cysteine + [acceptor protein]-L-lysine = [E2 ubiquitin-conjugating enzyme]-L-cysteine + N(6)-ubiquitinyl-[acceptor protein]-L-lysine.. The protein operates within protein modification; protein ubiquitination. Its function is as follows. E3 ubiquitin-protein ligase that acts as a negative regulator of the response to water stress. Mediates ubiquitination and subsequent proteasomal degradation of the drought-induced transcriptional activator DREB2A. Functionally redundant with DRIP1. This chain is E3 ubiquitin protein ligase DRIP2 (DRIP2), found in Arabidopsis thaliana (Mouse-ear cress).